Reading from the N-terminus, the 553-residue chain is Zinc finger matrin-type protein 1 (553 aa).

The tract at residues 16–36 is disordered; it reads TPSSPAATCSGPMAGGDTSSN. Matrin-type zinc fingers lie at residues 61–91, 125–155, 223–253, and 275–305; these read TFCK…KVRL, KFCG…KMRQ, KYCK…NQAR, and YVCP…KESM. Disordered stretches follow at residues 341–402 and 428–553; these read QFRQ…DQRV and HISR…ILGF. A compositionally biased stretch (acidic residues) spans 350-362; it reads DSCDYEEEEEQEP. Residues 431 to 453 show a composition bias toward low complexity; the sequence is RSPTSQDSSDNSSGSSSDESSGS. Positions 456-476 are enriched in basic residues; it reads KDKRRKRKHHRESRLRGSGRI. Residues 477-513 show a composition bias toward basic and acidic residues; that stretch reads RRGDENSEKRKRKGEDADSGKEDNKHDRGKTSGGDKD.

It localises to the nucleus. The protein is Zinc finger matrin-type protein 1 (zmat1) of Xenopus tropicalis (Western clawed frog).